The chain runs to 171 residues: Terminase, small subunit (171 aa).

This sequence belongs to the P23virus small terminase family. In terms of assembly, homononamer; forms a ring-like structure through which genomic DNA is translocated into the capsid. Heterodimer with the terminase large subunit; the active complex is probably heterooligomeric.

Functionally, the terminase small subunit binds to the packaging initiation site and regulates the ATPase activity of the terminase large subunit. The terminase lies at a unique vertex of the procapsid and is composed of two subunits, a small terminase subunit involved in viral DNA recognition (packaging sequence), and a large terminase subunit. Both terminase subunits heterooligomerize and are docked on the portal protein to form the packaging machine. This chain is Terminase, small subunit, found in Thermus virus P23-45 (Thermus thermophilus phage P23-45).